The sequence spans 445 residues: MHSQIWVVSTLLISIVLIVLTIVKFKFHPFLALLLASFFVGTMMGMGPLDMVNAIESGIGGTLGFLAAVIGLGTILGKMMEVSGAAERIGLTLQRCRWLSVDVIMVLVGLICGITLFVEVGVVLLIPLAFSIAKKTNTSLLKLAIPLCTALMAVHCVVPPHPAALYVANKLGADIGSVIVYGLLVGLMASLIGGPLFLKFLGQRLPFKPVPTEFADLKVRDEKTLPSLGATLFTILLPIALMLVKTIAELNMARESGLYILVEFIGNPITAMFIAVFVAYYVLGIRQHMSMGTMLTHTENGFGSIANILLIIGAGGAFNAILKSSSLADTLAVILSNMHMHPILLAWLVALILHAAVGSATVAMMGATAIVAPMLPLYPDISPEIIAIAIGSGAIGCTIVTDSLFWLVKQYCGATLNETFKYYTTATFIASVVALAGTFLLSFII.

Topologically, residues Met1–Gln4 are cytoplasmic. The helical transmembrane segment at Ile5 to Phe25 threads the bilayer. At Lys26–His28 the chain is on the periplasmic side. Residues Pro29 to Leu49 form a helical membrane-spanning segment. Topologically, residues Asp50–Glu56 are cytoplasmic. Residues Ser57–Gly77 traverse the membrane as a helical segment. The Periplasmic segment spans residues Lys78 to Met105. A helical membrane pass occupies residues Val106–Ile126. Over Pro127–Ser139 the chain is Cytoplasmic. Residues Leu140 to Pro160 traverse the membrane as a helical segment. Residues His161–Ser177 are Periplasmic-facing. A helical membrane pass occupies residues Val178–Leu198. At Lys199 to Lys223 the chain is on the cytoplasmic side. A helical transmembrane segment spans residues Thr224–Val244. At Lys245–Gly257 the chain is on the periplasmic side. The chain crosses the membrane as a helical span at residues Leu258–Val278. The Cytoplasmic portion of the chain corresponds to Ala279–Gly301. A helical membrane pass occupies residues Phe302–Leu322. Over Lys323 to Pro342 the chain is Periplasmic. The next 3 helical transmembrane spans lie at Ile343–Ala363, Met364–Glu384, and Ile385–Phe405. Residues Trp406 to Thr424 are Cytoplasmic-facing. A helical membrane pass occupies residues Thr425–Ile445.

The protein belongs to the GntP permease family.

It is found in the cell inner membrane. Functionally, a D-serine-specific transporter, may function as a H(+) symporter. This chain is D-serine transporter DsdX, found in Escherichia coli (strain K12).